Here is a 275-residue protein sequence, read N- to C-terminus: Transmembrane protein 45B (275 aa).

The next 7 helical transmembrane spans lie at 7-27, 47-67, 94-114, 116-136, 146-166, 180-200, and 212-232; these read HALPGSFFLIIGLCWSVKYPL, IVEAAIRTLFSVTGILAEQFV, LFFAVSGIVDMLTYLVSHVPL, VDRLVMAVAVFMEGFLFYYHV, IHSLLLYALFGGCVSISLEVI, LIILQGTWFWQIGFVLFPPFG, and LMFITMCFCWHYLAALSIVAV. 2 positions are modified to phosphoserine: serine 270 and serine 272.

Belongs to the TMEM45 family. In terms of assembly, (Microbial infection) Interacts with sindbis virus nsP1 and nsP4; these interactions lead to viral RNA replication inhibition. (Microbial infection) Interacts with chikungunya virus nsP1 and nsP4; these interactions lead to viral RNA replication inhibition.

It is found in the endosome membrane. It localises to the lysosome membrane. Its subcellular location is the golgi apparatus. The protein localises to the trans-Golgi network membrane. Its function is as follows. Plays a role in innate immunity. Mechanistically, promotes alphaviruses RNA degradation by interacting with the viral polymerase nsP4 and the mRNA-capping enzyme nsP1 and thereby interfering with the interaction between viral RNA and nsP1. The protein is Transmembrane protein 45B (TMEM45B) of Homo sapiens (Human).